The following is a 2194-amino-acid chain: Supervillin (2194 aa).

Positions 1-174 (MKRKERIARR…SSYSRTELSG (174 aa)) are interaction with MYLK. Disordered stretches follow at residues 35–98 (LEED…TQSL), 118–335 (EKYG…QRRH), 388–414 (PESISEGSWVGPAPQTVTKPPPSKVLE), 450–500 (EDRG…TERM), 513–563 (AVSQ…QTSK), 589–667 (RASR…KVDE), 685–719 (KSFDEKSVPKRRSRNAAVEQRLRRLQDRSHTQPVT), and 739–791 (HPVM…DSST). Serine 50 is modified (phosphoserine). A compositionally biased stretch (polar residues) spans 87-98 (PYSSGIMDTQSL). Basic and acidic residues-rich tracts occupy residues 139–161 (SRKDPEAAEKRGVRSERSAESSR) and 181–192 (ESKDYGLHRSDG). Serine 245 and serine 262 each carry phosphoserine. Basic and acidic residues-rich tracts occupy residues 283–294 (PKHEWFLQKDSE) and 308–319 (KVREKLVREESA). Residues 320 to 330 (RSSPELTSESL) show a composition bias toward polar residues. Residues serine 321 and serine 322 each carry the phosphoserine modification. Positions 455–467 (GRSQEAPSGTEDL) are enriched in polar residues. Positions 540 to 551 (PPQLQALKAKAP) are enriched in low complexity. Composition is skewed to basic and acidic residues over residues 592–615 (RKPELHSRVEGSSEGPGVERERGS) and 626–635 (ENRKTSERFR). A phosphoserine mark is found at serine 652 and serine 686. Over residues 704–714 (QRLRRLQDRSH) the composition is skewed to basic and acidic residues. A phosphoserine mark is found at serine 747 and serine 781. Residues 770–782 (LARDQTNESKDSA) show a composition bias toward basic and acidic residues. Tyrosine 829 carries the phosphotyrosine modification. Threonine 831 is modified (phosphothreonine). Residues serine 893, serine 899, serine 903, serine 947, serine 979, and serine 1031 each carry the phosphoserine modification. The segment at 1036–1077 (EFGEPTSEQTGAAAGKPAAPTATPVSWKPQDPSEQPQEKRYQ) is disordered. Residues 1045 to 1059 (TGAAAGKPAAPTATP) are compositionally biased toward low complexity. Residues serine 1099 and serine 1205 each carry the phosphoserine modification. Threonine 1210 bears the Phosphothreonine mark. Residues serine 1214, serine 1302, and serine 1385 each carry the phosphoserine modification. An interaction with NEB region spans residues 1399–1667 (SNVSLRSVNL…KFLDWTELKR (269 aa)). Gelsolin-like repeat units follow at residues 1421–1520 (KKLM…LGGQ), 1540–1662 (IETN…FLDW), 1732–1842 (ISVD…FQGG), 1861–1962 (WRLY…LGRR), and 1995–2102 (ATEF…FPSW). One can recognise an HP domain in the interval 2131–2194 (KLCKTIYPLA…VNLKKAKGLF (64 aa)).

Belongs to the villin/gelsolin family. As to quaternary structure, associates with F-actin. Interacts with NEB. Interacts with MYH9. Interacts with MYLK. Interacts with TASOR. In terms of assembly, interacts with TRIP6 and DYNLT1. Interacts with KIF14; at midbody during cytokinesis.

It is found in the cell membrane. The protein resides in the cytoplasm. The protein localises to the cytoskeleton. Its subcellular location is the cell projection. It localises to the invadopodium. It is found in the podosome. The protein resides in the midbody. The protein localises to the cleavage furrow. Functionally, forms a high-affinity link between the actin cytoskeleton and the membrane. Is among the first costameric proteins to assemble during myogenesis and it contributes to myogenic membrane structure and differentiation. Appears to be involved in myosin II assembly. May modulate myosin II regulation through MLCK during cell spreading, an initial step in cell migration. May play a role in invadopodial function. In terms of biological role, may be involved in modulation of focal adhesions. Supervillin-mediated down-regulation of focal adhesions involves binding to TRIP6. Plays a role in cytokinesis through KIF14 interaction. The chain is Supervillin from Bos taurus (Bovine).